The primary structure comprises 273 residues: MKNSSIRIAVVGAGGRMGRQLIQAIEQMDGVVLGAALERSGSSLIGSDAGELAGLGKSGITVKESLNAVQNDFDILIDFTRPEGTLAHLAFCHQHRKGMIIGTTGFDDAGKAAIKQAAQDIGIVFAANFSVGVNVMLKLLEKAAKVMGDYTDIEIIEAHHRHKVDAPSGTALAMGEAIADALGRDLKSCAVYAREGHTGERDPKSIGFATVRAGDIVGEHTAMFADIGERVEITHKASSRMTFANGAVRAAIWISSKENGLFDMRDVLSLDDL.

Residues 12 to 17 (GAGGRM) and E38 each bind NAD(+). R39 contacts NADP(+). Residues 102-104 (GTT) and 126-129 (AANF) contribute to the NAD(+) site. Residue H159 is the Proton donor/acceptor of the active site. A (S)-2,3,4,5-tetrahydrodipicolinate-binding site is contributed by H160. K163 serves as the catalytic Proton donor. 169 to 170 (GT) lines the (S)-2,3,4,5-tetrahydrodipicolinate pocket.

It belongs to the DapB family. Homotetramer.

It is found in the cytoplasm. The enzyme catalyses (S)-2,3,4,5-tetrahydrodipicolinate + NAD(+) + H2O = (2S,4S)-4-hydroxy-2,3,4,5-tetrahydrodipicolinate + NADH + H(+). It carries out the reaction (S)-2,3,4,5-tetrahydrodipicolinate + NADP(+) + H2O = (2S,4S)-4-hydroxy-2,3,4,5-tetrahydrodipicolinate + NADPH + H(+). The protein operates within amino-acid biosynthesis; L-lysine biosynthesis via DAP pathway; (S)-tetrahydrodipicolinate from L-aspartate: step 4/4. In terms of biological role, catalyzes the conversion of 4-hydroxy-tetrahydrodipicolinate (HTPA) to tetrahydrodipicolinate. The sequence is that of 4-hydroxy-tetrahydrodipicolinate reductase from Pectobacterium carotovorum subsp. carotovorum (strain PC1).